The chain runs to 349 residues: Phosphate carrier protein, mitochondrial (349 aa).

Solcar repeat units follow at residues 47–131, 144–229, and 246–324; these read KYFA…FKVQ, YRTF…TVEL, and EQLV…VKVW. 6 helical membrane passes run 48–68, 108–128, 147–167, 207–227, 248–268, and 304–324; these read YFALCGLGGILSCGITHTAVV, APTFIGYSLQGLCKFGLYEVF, FVYLAASASAEFFADIALSPL, PLWGRQIPYTMMKFACFEKTV, LVVTFAAGYIAGVFCAIVSHP, and IIMIGTLTALQWFIYDAVKVW.

The protein belongs to the mitochondrial carrier (TC 2.A.29) family.

The protein resides in the mitochondrion inner membrane. Transport of phosphate groups from the cytosol to the mitochondrial matrix. In Choristoneura fumiferana (Spruce budworm moth), this protein is Phosphate carrier protein, mitochondrial.